A 134-amino-acid polypeptide reads, in one-letter code: Small ribosomal subunit protein uS8c (134 aa).

The protein belongs to the universal ribosomal protein uS8 family. As to quaternary structure, part of the 30S ribosomal subunit.

The protein resides in the plastid. The protein localises to the chloroplast. In terms of biological role, one of the primary rRNA binding proteins, it binds directly to 16S rRNA central domain where it helps coordinate assembly of the platform of the 30S subunit. This chain is Small ribosomal subunit protein uS8c (rps8), found in Ipomoea purpurea (Common morning glory).